A 210-amino-acid polypeptide reads, in one-letter code: Imidazoleglycerol-phosphate dehydratase (210 aa).

This sequence belongs to the imidazoleglycerol-phosphate dehydratase family.

The protein resides in the cytoplasm. It carries out the reaction D-erythro-1-(imidazol-4-yl)glycerol 3-phosphate = 3-(imidazol-4-yl)-2-oxopropyl phosphate + H2O. It participates in amino-acid biosynthesis; L-histidine biosynthesis; L-histidine from 5-phospho-alpha-D-ribose 1-diphosphate: step 6/9. The polypeptide is Imidazoleglycerol-phosphate dehydratase (Mycobacterium marinum (strain ATCC BAA-535 / M)).